The primary structure comprises 312 residues: Pantothenate synthetase (312 aa).

Residue 42 to 49 (MGALHTGH) coordinates ATP. The active-site Proton donor is the His49. Residue Gln73 coordinates (R)-pantoate. Gln73 serves as a coordination point for beta-alanine. 159–162 (GEKD) is an ATP binding site. Gln165 is a binding site for (R)-pantoate. Residues Val188 and 196 to 199 (LSSR) each bind ATP.

It belongs to the pantothenate synthetase family. Homodimer.

Its subcellular location is the cytoplasm. It carries out the reaction (R)-pantoate + beta-alanine + ATP = (R)-pantothenate + AMP + diphosphate + H(+). It participates in cofactor biosynthesis; (R)-pantothenate biosynthesis; (R)-pantothenate from (R)-pantoate and beta-alanine: step 1/1. Catalyzes the condensation of pantoate with beta-alanine in an ATP-dependent reaction via a pantoyl-adenylate intermediate. This chain is Pantothenate synthetase, found in Rhodococcus jostii (strain RHA1).